The chain runs to 185 residues: dCTP deaminase (185 aa).

Residues 107-112 (KSTYAR), 131-133 (TLE), Gln-152, Tyr-166, and Gln-176 contribute to the dCTP site. The active-site Proton donor/acceptor is the Glu-133.

This sequence belongs to the dCTP deaminase family. In terms of assembly, homotrimer.

The catalysed reaction is dCTP + H2O + H(+) = dUTP + NH4(+). The protein operates within pyrimidine metabolism; dUMP biosynthesis; dUMP from dCTP (dUTP route): step 1/2. Its function is as follows. Catalyzes the deamination of dCTP to dUTP. The polypeptide is dCTP deaminase (Neorickettsia sennetsu (strain ATCC VR-367 / Miyayama) (Ehrlichia sennetsu)).